We begin with the raw amino-acid sequence, 214 residues long: Ribonuclease T (214 aa).

Residues 20 to 195 enclose the Exonuclease domain; the sequence is VVVDVETAGF…YDTQQTAELF (176 aa). Mg(2+) contacts are provided by Asp-23, Glu-25, His-182, and Asp-187. Residue His-182 is the Proton donor/acceptor of the active site.

It belongs to the RNase T family. In terms of assembly, homodimer. Mg(2+) is required as a cofactor.

Functionally, trims short 3' overhangs of a variety of RNA species, leaving a one or two nucleotide 3' overhang. Responsible for the end-turnover of tRNA: specifically removes the terminal AMP residue from uncharged tRNA (tRNA-C-C-A). Also appears to be involved in tRNA biosynthesis. The protein is Ribonuclease T of Vibrio campbellii (strain ATCC BAA-1116).